The following is a 364-amino-acid chain: Chorismate synthase (364 aa).

R47 is an NADP(+) binding site. FMN contacts are provided by residues 125–127 (RAS), G288, 303–307 (KPTAT), and R329.

The protein belongs to the chorismate synthase family. In terms of assembly, homotetramer. FMNH2 serves as cofactor.

The catalysed reaction is 5-O-(1-carboxyvinyl)-3-phosphoshikimate = chorismate + phosphate. Its pathway is metabolic intermediate biosynthesis; chorismate biosynthesis; chorismate from D-erythrose 4-phosphate and phosphoenolpyruvate: step 7/7. In terms of biological role, catalyzes the anti-1,4-elimination of the C-3 phosphate and the C-6 proR hydrogen from 5-enolpyruvylshikimate-3-phosphate (EPSP) to yield chorismate, which is the branch point compound that serves as the starting substrate for the three terminal pathways of aromatic amino acid biosynthesis. This reaction introduces a second double bond into the aromatic ring system. The protein is Chorismate synthase of Synechococcus sp. (strain CC9605).